The sequence spans 383 residues: ATP phosphoribosyltransferase regulatory subunit (383 aa).

It belongs to the class-II aminoacyl-tRNA synthetase family. HisZ subfamily. In terms of assembly, heteromultimer composed of HisG and HisZ subunits.

Its subcellular location is the cytoplasm. It functions in the pathway amino-acid biosynthesis; L-histidine biosynthesis; L-histidine from 5-phospho-alpha-D-ribose 1-diphosphate: step 1/9. Its function is as follows. Required for the first step of histidine biosynthesis. May allow the feedback regulation of ATP phosphoribosyltransferase activity by histidine. This Cupriavidus pinatubonensis (strain JMP 134 / LMG 1197) (Cupriavidus necator (strain JMP 134)) protein is ATP phosphoribosyltransferase regulatory subunit.